The following is a 179-amino-acid chain: Large ribosomal subunit protein uL6 (179 aa).

It belongs to the universal ribosomal protein uL6 family. In terms of assembly, part of the 50S ribosomal subunit.

This protein binds to the 23S rRNA, and is important in its secondary structure. It is located near the subunit interface in the base of the L7/L12 stalk, and near the tRNA binding site of the peptidyltransferase center. The polypeptide is Large ribosomal subunit protein uL6 (Syntrophus aciditrophicus (strain SB)).